A 317-amino-acid chain; its full sequence is Acetyl-coenzyme A carboxylase carboxyl transferase subunit alpha (317 aa).

In terms of domain architecture, CoA carboxyltransferase C-terminal spans 40 to 293 (LEVRVREAIL…GDVIANALAE (254 aa)).

It belongs to the AccA family. Acetyl-CoA carboxylase is a heterohexamer composed of biotin carboxyl carrier protein (AccB), biotin carboxylase (AccC) and two subunits each of ACCase subunit alpha (AccA) and ACCase subunit beta (AccD).

The protein localises to the cytoplasm. The enzyme catalyses N(6)-carboxybiotinyl-L-lysyl-[protein] + acetyl-CoA = N(6)-biotinyl-L-lysyl-[protein] + malonyl-CoA. The protein operates within lipid metabolism; malonyl-CoA biosynthesis; malonyl-CoA from acetyl-CoA: step 1/1. Component of the acetyl coenzyme A carboxylase (ACC) complex. First, biotin carboxylase catalyzes the carboxylation of biotin on its carrier protein (BCCP) and then the CO(2) group is transferred by the carboxyltransferase to acetyl-CoA to form malonyl-CoA. This Rhizobium etli (strain CIAT 652) protein is Acetyl-coenzyme A carboxylase carboxyl transferase subunit alpha.